The sequence spans 185 residues: CD160 antigen (185 aa).

Residues 1–27 form the signal peptide; it reads MQRILMAPGQSCCALAILLAIVNFQHG. The Ig-like V-type domain occupies 28 to 136; sequence GCIHVTSSAS…HGHFLSVLVT (109 aa). 2 disulfide bridges follow: cysteine 47–cysteine 115 and cysteine 64–cysteine 71. Asparagine 138 and asparagine 156 each carry an N-linked (GlcNAc...) asparagine glycan. Serine 160 carries GPI-anchor amidated serine lipidation. A propeptide spans 161–185 (removed in mature form); the sequence is SGFLQVKAWGMLVTSLVALQALYTL.

As to quaternary structure, homomultimer; disulfide-linked. Interacts with classical and non-classical MHC class I molecules. Interacts with TNFRSF14 (via cysteine-rich domain 1); this interaction is direct. Interacts with LCK and CD247/CD3 zeta chain. Expressed in resting and activated NK cell subsets (at protein level). Expressed in resting NKT cells (at protein level). Expressed in activated CD8+ T cells (at protein level). Highly expressed in intraepithelial lymphocyte (IEL) subsets, particularly in innate-like CD8A-positive IELs (at protein level).

It localises to the cell membrane. The protein resides in the secreted. In terms of biological role, receptor on immune cells capable to deliver stimulatory or inhibitory signals that regulate cell activation and differentiation. Exists as a GPI-anchored and as a transmembrane form, each likely initiating distinct signaling pathways via phosphoinositol 3-kinase in activated NK cells and via LCK and CD247/CD3 zeta chain in activated T cells. Receptor for both classical and non-classical MHC class I molecules. Receptor or ligand for TNF superfamily member TNFRSF14, participating in bidirectional cell-cell contact signaling between antigen presenting cells and lymphocytes. Upon ligation of TNFRSF14, provides stimulatory signal to NK cells enhancing IFNG production and anti-tumor immune response. On activated CD4+ T cells, interacts with TNFRSF14 and down-regulates CD28 costimulatory signaling, restricting memory and alloantigen-specific immune response. In the context of bacterial infection, acts as a ligand for TNFRSF14 on epithelial cells, triggering the production of antimicrobial proteins and pro-inflammatory cytokines. Its function is as follows. The soluble GPI-cleaved form, usually released by activated lymphocytes, might play an immune regulatory role by limiting lymphocyte effector functions. The protein is CD160 antigen of Mus musculus (Mouse).